The primary structure comprises 70 residues: Protein SlyX homolog (70 aa).

This sequence belongs to the SlyX family.

The protein is Protein SlyX homolog of Agrobacterium fabrum (strain C58 / ATCC 33970) (Agrobacterium tumefaciens (strain C58)).